Here is a 274-residue protein sequence, read N- to C-terminus: Thiamine kinase (274 aa).

Belongs to the thiamine kinase family.

It catalyses the reaction thiamine + ATP = thiamine phosphate + ADP + H(+). The protein operates within cofactor biosynthesis; thiamine diphosphate biosynthesis; thiamine phosphate from thiamine: step 1/1. Functionally, catalyzes the ATP-dependent phosphorylation of thiamine to thiamine phosphate. Is involved in thiamine salvage. The chain is Thiamine kinase from Escherichia coli O81 (strain ED1a).